Consider the following 264-residue polypeptide: Thymidylate synthase (264 aa).

Arg-21 is a dUMP binding site. A (6R)-5,10-methylene-5,6,7,8-tetrahydrofolate-binding site is contributed by His-51. 126–127 (RR) lines the dUMP pocket. The active-site Nucleophile is the Cys-146. Residues 166-169 (RSCD), Asn-177, and 207-209 (HLY) each bind dUMP. Asp-169 contacts (6R)-5,10-methylene-5,6,7,8-tetrahydrofolate. Residue Ala-263 coordinates (6R)-5,10-methylene-5,6,7,8-tetrahydrofolate.

This sequence belongs to the thymidylate synthase family. Bacterial-type ThyA subfamily. Homodimer.

The protein resides in the cytoplasm. It carries out the reaction dUMP + (6R)-5,10-methylene-5,6,7,8-tetrahydrofolate = 7,8-dihydrofolate + dTMP. It participates in pyrimidine metabolism; dTTP biosynthesis. Its function is as follows. Catalyzes the reductive methylation of 2'-deoxyuridine-5'-monophosphate (dUMP) to 2'-deoxythymidine-5'-monophosphate (dTMP) while utilizing 5,10-methylenetetrahydrofolate (mTHF) as the methyl donor and reductant in the reaction, yielding dihydrofolate (DHF) as a by-product. This enzymatic reaction provides an intracellular de novo source of dTMP, an essential precursor for DNA biosynthesis. This is Thymidylate synthase from Sodalis glossinidius (strain morsitans).